A 390-amino-acid chain; its full sequence is Lipid-A-disaccharide synthase (390 aa).

It belongs to the LpxB family.

The enzyme catalyses a lipid X + a UDP-2-N,3-O-bis[(3R)-3-hydroxyacyl]-alpha-D-glucosamine = a lipid A disaccharide + UDP + H(+). The protein operates within bacterial outer membrane biogenesis; LPS lipid A biosynthesis. Its function is as follows. Condensation of UDP-2,3-diacylglucosamine and 2,3-diacylglucosamine-1-phosphate to form lipid A disaccharide, a precursor of lipid A, a phosphorylated glycolipid that anchors the lipopolysaccharide to the outer membrane of the cell. This Neisseria gonorrhoeae (strain ATCC 700825 / FA 1090) protein is Lipid-A-disaccharide synthase.